Reading from the N-terminus, the 88-residue chain is UPF0297 protein SSU98_0066 (88 aa).

The protein belongs to the UPF0297 family.

The protein is UPF0297 protein SSU98_0066 of Streptococcus suis (strain 98HAH33).